The chain runs to 173 residues: MSVESQPVEKISELPAGSTTVVHAEKAQKLIQKLGLKRVEGITRVAMRRPKNILLIINEPIVYKSSNNAYIVLGKVTVEDMAAQARAFNESQKQATETKEEAAITEESGDAQPADTAKIEESFEQEKAVDETGVDAKDIELVMAQANVSRAKAVTALKENNSDVVNAIMSLTM.

One can recognise an NAC-A/B domain in the interval 21–85; the sequence is VVHAEKAQKL…VTVEDMAAQA (65 aa). A disordered region spans residues 89-117; the sequence is NESQKQATETKEEAAITEESGDAQPADTA. The residue at position 122 (S122) is a Phosphoserine. Positions 134–171 constitute a UBA domain; that stretch reads VDAKDIELVMAQANVSRAKAVTALKENNSDVVNAIMSL.

This sequence belongs to the NAC-alpha family. As to quaternary structure, part of the nascent polypeptide-associated complex (NAC), consisting of ucp15 and btf3. NAC associates with ribosomes via btf3.

The protein resides in the cytoplasm. Its subcellular location is the nucleus. In terms of biological role, component of the nascent polypeptide-associated complex (NAC), a dynamic component of the ribosomal exit tunnel, protecting the emerging polypeptides from interaction with other cytoplasmic proteins to ensure appropriate nascent protein targeting. The NAC complex also promotes mitochondrial protein import by enhancing productive ribosome interactions with the outer mitochondrial membrane and blocks the inappropriate interaction of ribosomes translating non-secretory nascent polypeptides with translocation sites in the membrane of the endoplasmic reticulum. Ucp15 may also be involved in transcription regulation. The polypeptide is Nascent polypeptide-associated complex subunit alpha (egd2) (Schizosaccharomyces pombe (strain 972 / ATCC 24843) (Fission yeast)).